Here is a 401-residue protein sequence, read N- to C-terminus: UPF0242 protein CPn_0755/CP_1117/CPj0755/CpB0783 (401 aa).

The protein belongs to the UPF0242 family.

The chain is UPF0242 protein CPn_0755/CP_1117/CPj0755/CpB0783 from Chlamydia pneumoniae (Chlamydophila pneumoniae).